A 604-amino-acid polypeptide reads, in one-letter code: Ectonucleoside triphosphate diphosphohydrolase 7 (604 aa).

Residues 1–28 lie on the Cytoplasmic side of the membrane; sequence MARISFSYLCPASWYFTVPTVSPFLRQR. The helical transmembrane segment at 29–49 threads the bilayer; the sequence is VAFLGLFFISCLLLLMLIIDF. Residues 50–546 are Vesicular-facing; the sequence is RHWSASLPRD…QAHGSWFRLS (497 aa). The active-site Proton acceptor is glutamate 217. Asparagine 330 carries N-linked (GlcNAc...) asparagine glycosylation. Cysteine 448 and cysteine 477 are oxidised to a cystine. A helical membrane pass occupies residues 547–567; that stretch reads FVYNHYLFFACILVVLLAIFL. Topologically, residues 568 to 604 are cytoplasmic; that stretch reads YLLRLRRIHHRQTRASAPLDLLWLEEVVPMMGVQVGP.

Belongs to the GDA1/CD39 NTPase family. Ca(2+) serves as cofactor. Requires Mg(2+) as cofactor.

Its subcellular location is the cytoplasmic vesicle membrane. The catalysed reaction is a ribonucleoside 5'-triphosphate + H2O = a ribonucleoside 5'-diphosphate + phosphate + H(+). The enzyme catalyses UTP + H2O = UDP + phosphate + H(+). It carries out the reaction GTP + H2O = GDP + phosphate + H(+). It catalyses the reaction CTP + H2O = CDP + phosphate + H(+). In terms of biological role, catalyzes the hydrolysis of nucleoside triphosphates and diphosphates in a calcium- or magnesium-dependent manner. Preferentially hydrolyzes nucleoside 5'-triphosphates, with substrate preference for UTP &gt; GTP &gt; CTP. Hydrolyzes ATP and nucleoside diphosphates only to a minor extent. This is Ectonucleoside triphosphate diphosphohydrolase 7 (ENTPD7) from Homo sapiens (Human).